The primary structure comprises 600 residues: Elongation factor 4 (600 aa).

The tr-type G domain occupies Ser5–Thr187. GTP is bound by residues Asp17–Thr22 and Asn134–Asp137.

The protein belongs to the TRAFAC class translation factor GTPase superfamily. Classic translation factor GTPase family. LepA subfamily.

The protein resides in the cell inner membrane. It catalyses the reaction GTP + H2O = GDP + phosphate + H(+). Its function is as follows. Required for accurate and efficient protein synthesis under certain stress conditions. May act as a fidelity factor of the translation reaction, by catalyzing a one-codon backward translocation of tRNAs on improperly translocated ribosomes. Back-translocation proceeds from a post-translocation (POST) complex to a pre-translocation (PRE) complex, thus giving elongation factor G a second chance to translocate the tRNAs correctly. Binds to ribosomes in a GTP-dependent manner. The protein is Elongation factor 4 of Psychrobacter sp. (strain PRwf-1).